Consider the following 216-residue polypeptide: Phosphatidylserine decarboxylase proenzyme (216 aa).

Catalysis depends on S182, which acts as the Schiff-base intermediate with substrate; via pyruvic acid. Pyruvic acid (Ser); by autocatalysis is present on S182.

It belongs to the phosphatidylserine decarboxylase family. PSD-A subfamily. Heterodimer of a large membrane-associated beta subunit and a small pyruvoyl-containing alpha subunit. The cofactor is pyruvate. Is synthesized initially as an inactive proenzyme. Formation of the active enzyme involves a self-maturation process in which the active site pyruvoyl group is generated from an internal serine residue via an autocatalytic post-translational modification. Two non-identical subunits are generated from the proenzyme in this reaction, and the pyruvate is formed at the N-terminus of the alpha chain, which is derived from the carboxyl end of the proenzyme. The post-translation cleavage follows an unusual pathway, termed non-hydrolytic serinolysis, in which the side chain hydroxyl group of the serine supplies its oxygen atom to form the C-terminus of the beta chain, while the remainder of the serine residue undergoes an oxidative deamination to produce ammonia and the pyruvoyl prosthetic group on the alpha chain.

Its subcellular location is the cell membrane. The catalysed reaction is a 1,2-diacyl-sn-glycero-3-phospho-L-serine + H(+) = a 1,2-diacyl-sn-glycero-3-phosphoethanolamine + CO2. It functions in the pathway phospholipid metabolism; phosphatidylethanolamine biosynthesis; phosphatidylethanolamine from CDP-diacylglycerol: step 2/2. Its function is as follows. Catalyzes the formation of phosphatidylethanolamine (PtdEtn) from phosphatidylserine (PtdSer). In Burkholderia pseudomallei (strain 1106a), this protein is Phosphatidylserine decarboxylase proenzyme.